The primary structure comprises 103 residues: Large ribosomal subunit protein bL21 (103 aa).

Belongs to the bacterial ribosomal protein bL21 family. In terms of assembly, part of the 50S ribosomal subunit. Contacts protein L20.

Functionally, this protein binds to 23S rRNA in the presence of protein L20. This Dechloromonas aromatica (strain RCB) protein is Large ribosomal subunit protein bL21.